A 429-amino-acid polypeptide reads, in one-letter code: 3-phosphoshikimate 1-carboxyvinyltransferase (429 aa).

Residues lysine 25, serine 26, and arginine 30 each coordinate 3-phosphoshikimate. Phosphoenolpyruvate is bound at residue lysine 25. Phosphoenolpyruvate contacts are provided by glycine 99 and arginine 127. Residues serine 173, serine 174, glutamine 175, serine 201, aspartate 317, asparagine 340, and lysine 344 each contribute to the 3-phosphoshikimate site. Glutamine 175 is a binding site for phosphoenolpyruvate. The active-site Proton acceptor is aspartate 317. The phosphoenolpyruvate site is built by arginine 348, arginine 390, and lysine 415.

Belongs to the EPSP synthase family. In terms of assembly, monomer.

The protein resides in the cytoplasm. It catalyses the reaction 3-phosphoshikimate + phosphoenolpyruvate = 5-O-(1-carboxyvinyl)-3-phosphoshikimate + phosphate. Its pathway is metabolic intermediate biosynthesis; chorismate biosynthesis; chorismate from D-erythrose 4-phosphate and phosphoenolpyruvate: step 6/7. In terms of biological role, catalyzes the transfer of the enolpyruvyl moiety of phosphoenolpyruvate (PEP) to the 5-hydroxyl of shikimate-3-phosphate (S3P) to produce enolpyruvyl shikimate-3-phosphate and inorganic phosphate. This Pseudoalteromonas atlantica (strain T6c / ATCC BAA-1087) protein is 3-phosphoshikimate 1-carboxyvinyltransferase.